Here is a 432-residue protein sequence, read N- to C-terminus: MYYCISFTHKNTDIALREKLSFSNEAKKSEFLKIISTHENIEECLVISTCNRVEIVAFVKMACAEFIVKSLALLCDVDKDILLEKADIFEDSGAIHHLFSVASSLDSLVVGETQIAGQLKDAFAFAVKNNFCGVHLSRAVHSAFKCAAKVRNETQISKNSISVASVAVAKAKELADLTQKKAVVIGAGEMGELVAKHLIAAGAKVIILNRDLQKAKDLCERLGVLSEYDSLENLKKYLNQYEFFFSATNAPNAIITNSLIEELSYKRYFFDIAVPRDIDINENENISVFAVDDLEIVVQKNLALREQEARMAYGIIGRETSEFFRYLNDLALMPIIKAIRLQAKEYADKQLEIALKKGYLKKSDKEEARKLIHQVFKAFLHTPTVNLKHLQGKMQSDTVINAMRYVFDLQNNLEGLNQYKCEFDMENNDEIY.

Substrate is bound by residues 49 to 52 (TCNR), S107, 112 to 114 (ETQ), and Q118. Residue C50 is the Nucleophile of the active site. 186-191 (GAGEMG) lines the NADP(+) pocket.

The protein belongs to the glutamyl-tRNA reductase family. As to quaternary structure, homodimer.

The catalysed reaction is (S)-4-amino-5-oxopentanoate + tRNA(Glu) + NADP(+) = L-glutamyl-tRNA(Glu) + NADPH + H(+). The protein operates within porphyrin-containing compound metabolism; protoporphyrin-IX biosynthesis; 5-aminolevulinate from L-glutamyl-tRNA(Glu): step 1/2. Its function is as follows. Catalyzes the NADPH-dependent reduction of glutamyl-tRNA(Glu) to glutamate 1-semialdehyde (GSA). The sequence is that of Glutamyl-tRNA reductase from Campylobacter jejuni (strain RM1221).